The sequence spans 405 residues: Pulcherriminic acid synthase (405 aa).

4 residues coordinate heme: K62, N229, R285, and C353.

This sequence belongs to the cytochrome P450 family. As to quaternary structure, homodimer. Heme is required as a cofactor.

It carries out the reaction cyclo(L-leucyl-L-leucyl) + 6 reduced [2Fe-2S]-[ferredoxin] + 3 O2 + 4 H(+) = pulcherriminic acid + 6 oxidized [2Fe-2S]-[ferredoxin] + 4 H2O. Its function is as follows. Involved in the biosynthesis of pulcherrimin, a red extracellular pigment. Catalyzes the oxidation of cyclo(L-Leu-L-Leu) (cLL) to yield pulcherriminic acid which forms pulcherrimin via a nonenzymic reaction with Fe(3+). Substrates with small alkyl groups (cAA, cLG, cLP) exhibit weaker binding to CYP134A1, but substrates with larger hydrophobic side chains bind in a similar regime to cLL. This is Pulcherriminic acid synthase (cypX) from Bacillus subtilis (strain 168).